Here is a 520-residue protein sequence, read N- to C-terminus: MIDFRENWRIILLVIVVIVSLFALVSPTLASGPDSNSAVVQQSSQTNLQYGLELAGGTRVRAPLVGVTAEEVEFEPANAREVEQRIATAIDGAGPADVIARPVTETTGTVEVTVEGVSTTELQSILESTGYTASTVRTGVTETTRQEVVRILENKINEAGLSGGTVQEVTTAGGGHFILIEVPNEDAASVRSLVSERGTVVVQAHYPQDDIYTQQTVLQQDNFQSIGSAQEGQSGGAYVPVTVRESAANEFQQATVDTTLARPGGTRCTYSRDQNSTEPCLLLVVNGEVTNSFGMAPRLADSLRGGSWAQDPVFQLQTANVSEAQEVAINLRAGALPAKLDLTGDDGGTTSFISPSQGENFRTDSLLAGLVAVFAVSGVVFLRYRDARVALPMIVTALSEVLILLGFAAGIGYPLDLSVIAGFITVIGTGVDDLVIIADEVLAEGGVSSRRVFQSRFRRAFWVIGAAAATTIIAMSPLAILSLGDLQGFAIFTILGVLVGVLITRPAYGDILRALTTGNL.

The next 6 membrane-spanning stretches (helical) occupy residues 10-30 (IILLVIVVIVSLFALVSPTLA), 364-384 (DSLLAGLVAVFAVSGVVFLRY), 391-411 (LPMIVTALSEVLILLGFAAGI), 417-437 (LSVIAGFITVIGTGVDDLVII), 461-481 (FWVIGAAAATTIIAMSPLAIL), and 483-503 (LGDLQGFAIFTILGVLVGVLI).

This sequence belongs to the SecD/SecF family. SecD subfamily. Part of the protein translocation apparatus. Forms a complex with SecF.

It localises to the cell membrane. Its function is as follows. Involved in protein export. This chain is Protein-export membrane protein SecD, found in Haloquadratum walsbyi (strain DSM 16790 / HBSQ001).